The primary structure comprises 581 residues: Coiled-coil domain-containing protein 102A (581 aa).

Disordered regions lie at residues 1–61 (MNHT…GLGC), 156–219 (QRVR…IGTD), 496–517 (QAED…SLDE), and 534–581 (SRLR…LQIP). The span at 39–59 (TPSPSGGTPSSSPPLLLSPGL) shows a compositional bias: low complexity. The stretch at 70–164 (REELRLRELE…AQRVRAEQSS (95 aa)) forms a coiled coil. Residues 161–184 (EQSSPENASTAPESISSTASTHSN) are compositionally biased toward polar residues. Residues 185–202 (QPREAEIKQDNQDEEGVR) are compositionally biased toward basic and acidic residues. Residues 270–541 (AALEEDTSKL…LQSRLRRQQN (272 aa)) are a coiled coil. Over residues 559–581 (EDADGPPSDPDEDEEEELQLQIP) the composition is skewed to acidic residues.

This chain is Coiled-coil domain-containing protein 102A (ccdc102a), found in Danio rerio (Zebrafish).